The chain runs to 114 residues: Replication initiation control protein YabA (114 aa).

Residues histidine 79, cysteine 81, cysteine 95, and cysteine 98 each coordinate Zn(2+).

This sequence belongs to the YabA family. Homotetramer. Interacts with both DnaA and DnaN, acting as a bridge between these two proteins. The cofactor is Zn(2+).

The protein resides in the cytoplasm. The protein localises to the nucleoid. In terms of biological role, involved in control of chromosome replication initiation. Inhibits the cooperative binding of DnaA to the oriC region, thus negatively regulating initiation of chromosome replication. Inhibits the ability of DnaA-ATP to form a helix on DNA; does not disassemble preformed DnaA-DNA helices. Decreases the residence time of DnaA on the chromosome at its binding sites (oriC, replication forks and promoter-binding sites). Tethers DnaA to the replication machinery via the DNA polymerase beta sliding clamp subunit (dnaN). Associates with oriC and other DnaA targets on the chromosome in a DnaA-dependent manner. The polypeptide is Replication initiation control protein YabA (Lactobacillus johnsonii (strain CNCM I-12250 / La1 / NCC 533)).